The chain runs to 342 residues: Apurinic-apyrimidinic endonuclease 1 (342 aa).

Positions 61, 136, 170, 173, 207, 220, 222, and 252 each coordinate Zn(2+). Basic and acidic residues predominate over residues 299-310 (HLNKFEKKEAKK). The interval 299–342 (HLNKFEKKEAKKDRKKKSKDGDQTTLLLRKKQKLGNAEVKSLDE) is disordered.

It belongs to the AP endonuclease 2 family. Requires Zn(2+) as cofactor.

The protein localises to the nucleus. In terms of biological role, DNA repair enzyme that cleaves apurinic/apyrimidinic (AP) sites and removes 3'-blocking groups present at single strand breaks of damaged DNA. Provides back-up AP endonuclease (APE) activity to apn2 together with uve1. This chain is Apurinic-apyrimidinic endonuclease 1 (apn1), found in Schizosaccharomyces pombe (strain 972 / ATCC 24843) (Fission yeast).